A 1004-amino-acid polypeptide reads, in one-letter code: NADH:acrylate oxidoreductase (1004 aa).

T455 carries the FMN phosphoryl threonine modification. Residues A508, E527, N535, T536, G540, G541, and D775 each contribute to the FAD site. R834 (proton donor) is an active-site residue. H941, E970, A985, and L986 together coordinate FAD.

The protein belongs to the FAD-dependent oxidoreductase 2 family. FRD/SDH subfamily. Requires FAD as cofactor. The cofactor is FMN. Post-translationally, is flavinylated on Thr-455 by ApbE, encoded in a neighboring gene. Flavinylation is essential for catalytic activity.

It carries out the reaction acrylate + NADH + H(+) = propanoate + NAD(+). Functionally, catalyzes the NADH-dependent reduction of acrylate to propanoate. The principal role of ARD in Vibrio seems to be the energy-saving detoxification of acrylate coming from the environment. May also use acrylate as the terminal electron acceptor for NADH regeneration at oxygen deficiency. NADPH cannot replace NADH as the electron donor. Is also able to reduce methacrylate in vitro, but with a much lower efficiency. In Vibrio harveyi (Beneckea harveyi), this protein is NADH:acrylate oxidoreductase.